The sequence spans 356 residues: MRVTDFSFELPESLIAHYPMPERSSCRLLSLDGPTGALTHGTFTDLLDKLNPGDLLVFNNTRVIPARLFGRKASGGKIEVLVERMLDDKRILAHIRASKAPKPGAELLLGDDESINATMTARHGALFEVGFNDERSVLDILNSIGHMPLPPYIDRPDEDADRELYQTVYSEKPGAVAAPTAGLHFDEPLLEKLRAKGVEMAFVTLHVGAGTFQPVRVDTIEDHIMHSEYAEVPQDVVDAVLAAKARGNRVIAVGTTSVRSLESAAQAAKNDLIEPFFDDTQIFIYPGFQYKVVDALVTNFHLPESTLIMLVSAFAGYQHTMNAYKAAVEEKYRFFSYGDAMFITYNPQAINERVGE.

This sequence belongs to the QueA family. As to quaternary structure, monomer.

Its subcellular location is the cytoplasm. The enzyme catalyses 7-aminomethyl-7-carbaguanosine(34) in tRNA + S-adenosyl-L-methionine = epoxyqueuosine(34) in tRNA + adenine + L-methionine + 2 H(+). The protein operates within tRNA modification; tRNA-queuosine biosynthesis. In terms of biological role, transfers and isomerizes the ribose moiety from AdoMet to the 7-aminomethyl group of 7-deazaguanine (preQ1-tRNA) to give epoxyqueuosine (oQ-tRNA). This chain is S-adenosylmethionine:tRNA ribosyltransferase-isomerase, found in Escherichia coli O8 (strain IAI1).